Consider the following 339-residue polypeptide: Ketol-acid reductoisomerase (NADP(+)) (339 aa).

The 182-residue stretch at 1–182 folds into the KARI N-terminal Rossmann domain; sequence MRVYYDRDAD…GGGRSGVIET (182 aa). NADP(+) contacts are provided by residues 24 to 27, R48, S51, T53, and 83 to 86; these read YGSQ and DELQ. H108 is an active-site residue. G134 serves as a coordination point for NADP(+). The KARI C-terminal knotted domain maps to 183–328; it reads TFKEECETDL…GKLRAMMPWI (146 aa). Mg(2+)-binding residues include D191, E195, E227, and E231. S252 provides a ligand contact to substrate.

Belongs to the ketol-acid reductoisomerase family. The cofactor is Mg(2+).

It catalyses the reaction (2R)-2,3-dihydroxy-3-methylbutanoate + NADP(+) = (2S)-2-acetolactate + NADPH + H(+). It carries out the reaction (2R,3R)-2,3-dihydroxy-3-methylpentanoate + NADP(+) = (S)-2-ethyl-2-hydroxy-3-oxobutanoate + NADPH + H(+). It participates in amino-acid biosynthesis; L-isoleucine biosynthesis; L-isoleucine from 2-oxobutanoate: step 2/4. The protein operates within amino-acid biosynthesis; L-valine biosynthesis; L-valine from pyruvate: step 2/4. Involved in the biosynthesis of branched-chain amino acids (BCAA). Catalyzes an alkyl-migration followed by a ketol-acid reduction of (S)-2-acetolactate (S2AL) to yield (R)-2,3-dihydroxy-isovalerate. In the isomerase reaction, S2AL is rearranged via a Mg-dependent methyl migration to produce 3-hydroxy-3-methyl-2-ketobutyrate (HMKB). In the reductase reaction, this 2-ketoacid undergoes a metal-dependent reduction by NADPH to yield (R)-2,3-dihydroxy-isovalerate. The sequence is that of Ketol-acid reductoisomerase (NADP(+)) from Brucella canis (strain ATCC 23365 / NCTC 10854 / RM-666).